An 810-amino-acid polypeptide reads, in one-letter code: Venom phosphodiesterase 2 (810 aa).

Residues M1–G23 form the signal peptide. In terms of domain architecture, SMB spans Q33–S77. Cystine bridges form between C37-C42, C37-C54, C42-C72, C52-C54, C52-C65, C58-C64, C65-C72, C83-C129, and C91-C303. A divalent metal cation-binding residues include D106 and T144. Residue T144 is the AMP-threonine intermediate of the active site. N-linked (GlcNAc...) asparagine glycosylation is found at N175, N218, and N229. K230 provides a ligand contact to AMP. Positions 264, 268, 311, and 312 each coordinate a divalent metal cation. H268 is a binding site for AMP. 6 disulfide bridges follow: C319–C416, C367–C752, C500–C558, C513–C613, C515–C598, and C721–C731. N364 carries N-linked (GlcNAc...) asparagine glycosylation. Position 421 (H421) interacts with a divalent metal cation. N471, N553, N633, and N704 each carry an N-linked (GlcNAc...) asparagine glycan.

This sequence belongs to the nucleotide pyrophosphatase/phosphodiesterase family. In terms of assembly, monomer cleaved in two subunits; disulfide-linked. Is synthesized as a single-chain protein and is subsequently cleaved to form a two-subunit protein held together with disulfide bonds. Requires a divalent metal cation as cofactor. Expressed by venom gland.

The protein resides in the secreted. It carries out the reaction ADP + H2O = AMP + phosphate + H(+). Hydrolyzes ADP with high activity. Shows weak or no activity on 5'-AMP, 5'-GMP, 3'-AMP, ATP, cAMP, and cGMP. Is devoid of monophosphatase and proteinase activities. Dose-dependently inhibits platelet aggregation induced by ADP (IC(50)=0.99 uM) and collagen (IC(50)=1.4 uM). This is Venom phosphodiesterase 2 from Crotalus adamanteus (Eastern diamondback rattlesnake).